We begin with the raw amino-acid sequence, 77 residues long: Epoxide hydrolase (77 aa).

In terms of assembly, monomer.

It carries out the reaction an epoxide + H2O = an ethanediol. Functionally, this enzyme acts on aliphatic epoxides. Its substrates include epichlorohydrin, epibromohydrin, epoxyoctane and styrene epoxide. This chain is Epoxide hydrolase, found in Pseudomonas sp. (strain AD1).